Here is a 114-residue protein sequence, read N- to C-terminus: MNNIIREITNEQLRTDLPSFRPGDTLRVHVKVIEGSRERIQVFEGVVIKRRGTGVSETFTVRKISYGVGVERTFPLHSPKIDKIEVKRRGKVRRAKLYYLRNLRGKAARIKEIR.

Belongs to the bacterial ribosomal protein bL19 family.

Functionally, this protein is located at the 30S-50S ribosomal subunit interface and may play a role in the structure and function of the aminoacyl-tRNA binding site. The polypeptide is Large ribosomal subunit protein bL19 (Halalkalibacterium halodurans (strain ATCC BAA-125 / DSM 18197 / FERM 7344 / JCM 9153 / C-125) (Bacillus halodurans)).